The primary structure comprises 185 residues: Sulfopyruvate decarboxylase subunit beta (185 aa).

This sequence belongs to the TPP enzyme family. Heterododecamer composed of 6 subunits alpha and 6 subunits beta. Thiamine diphosphate is required as a cofactor.

It catalyses the reaction 3-sulfopyruvate + H(+) = sulfoacetaldehyde + CO2. The protein operates within cofactor biosynthesis; coenzyme M biosynthesis; sulfoacetaldehyde from phosphoenolpyruvate and sulfite: step 4/4. In terms of biological role, involved in the biosynthesis of the coenzyme M (2-mercaptoethanesulfonic acid). Catalyzes the decarboxylation of sulfopyruvate to sulfoacetaldehyde. In Methanococcus maripaludis (strain DSM 14266 / JCM 13030 / NBRC 101832 / S2 / LL), this protein is Sulfopyruvate decarboxylase subunit beta.